A 247-amino-acid chain; its full sequence is Sec-independent protein translocase protein TatC (247 aa).

5 helical membrane passes run isoleucine 21–isoleucine 41, alanine 71–valine 91, isoleucine 109–isoleucine 129, phenylalanine 154–leucine 174, and phenylalanine 195–isoleucine 215.

This sequence belongs to the TatC family. As to quaternary structure, forms a complex with TatA.

The protein resides in the cell membrane. Functionally, part of the twin-arginine translocation (Tat) system that transports large folded proteins containing a characteristic twin-arginine motif in their signal peptide across membranes. The protein is Sec-independent protein translocase protein TatC of Listeria innocua serovar 6a (strain ATCC BAA-680 / CLIP 11262).